The sequence spans 456 residues: MGQTLFDKVWNKHVLTGNEGEPQLLYIDLHLIHEVTSPQAFEGLRLQNRKLRRPDLTFATLDHNVPTIDIFNIKDEIANKQITTLQKNAKEFGVQLFDMGSVEQGIVHMVGPETGLTQPGKTIVCGDSHTATHGAFGAIAFGIGTSEVEHVFATQTLWQTKPKNLKIDVTGQLPKGVYAKDIILYLISQYGVDFGTGYAIEFTGETIRSLSMEARMTICNMAIEAGAKYGLMQPDEMTFAYVKDRKYARNFDRSINDWRQLYTDADAKFDKVIKLDVTNLEPQVTWGTNPEMGVSFNTPFPKIKNINDERAYQYMGLKPGQKAEDIDLGYVFLGSCTNARLSDLVEASRIVKGKQVHPKITAIVVPGSRSVKKEAEALGLDKIFKDAGFQWREPGCSMCLGMNPDQVPEGIHCASTSNRNFEGRQGKGARTHLVSPAMAAAAAIEGRFVDVRKVVV.

[4Fe-4S] cluster is bound by residues C336, C396, and C399.

This sequence belongs to the aconitase/IPM isomerase family. LeuC type 1 subfamily. As to quaternary structure, heterodimer of LeuC and LeuD. It depends on [4Fe-4S] cluster as a cofactor.

The enzyme catalyses (2R,3S)-3-isopropylmalate = (2S)-2-isopropylmalate. It functions in the pathway amino-acid biosynthesis; L-leucine biosynthesis; L-leucine from 3-methyl-2-oxobutanoate: step 2/4. In terms of biological role, catalyzes the isomerization between 2-isopropylmalate and 3-isopropylmalate, via the formation of 2-isopropylmaleate. This Staphylococcus haemolyticus (strain JCSC1435) protein is 3-isopropylmalate dehydratase large subunit.